A 972-amino-acid polypeptide reads, in one-letter code: Mast/stem cell growth factor receptor Kit (972 aa).

The N-terminal stretch at M1–S25 is a signal peptide. Topologically, residues Q26–P520 are extracellular. Ig-like C2-type domains follow at residues P27 to R112, D121 to R205, P212 to V308, P317 to N410, and P413 to A507. Intrachain disulfides connect C58-C97, C136-C186, C151-C183, and C233-C290. N-linked (GlcNAc...) asparagine glycosylation is found at N94 and N145. N-linked (GlcNAc...) asparagine glycans are attached at residues N283, N293, N300, N320, N352, N367, N400, N463, and N486. A disulfide bridge links C428 with C491. A helical transmembrane segment spans residues L521–Y541. Residues K542 to V972 lie on the Cytoplasmic side of the membrane. 4 positions are modified to phosphotyrosine; by autocatalysis: Y543, Y549, Y564, and Y566. A Mg(2+)-binding site is contributed by Y564. The interval Y564–Y566 is important for interaction with phosphotyrosine-binding proteins. Positions L585 to S933 constitute a Protein kinase domain. Residues G592 to V599, K619, and E667 to D673 each bind ATP. A phosphotyrosine; by autocatalysis mark is found at Y699, Y717, and Y726. A phosphoserine; by PKC/PRKCA mark is found at S737 and S742. D788 functions as the Proton acceptor in the catalytic mechanism. R792 is a binding site for ATP. Mg(2+)-binding residues include N793 and D806. At S817 the chain carries Phosphoserine. The residue at position 819 (Y819) is a Phosphotyrosine; by autocatalysis. S887 is modified (phosphoserine). 2 positions are modified to phosphotyrosine; by autocatalysis: Y896 and Y932. Position 955 is a phosphoserine (S955).

This sequence belongs to the protein kinase superfamily. Tyr protein kinase family. CSF-1/PDGF receptor subfamily. As to quaternary structure, monomer in the absence of bound KITLG/SCF. Homodimer in the presence of bound KITLG/SCF, forming a heterotetramer with two KITLG/SCF molecules. Interacts (via phosphorylated tyrosine residues) with the adapter proteins GRB2 and GRB7 (via SH2 domain), and SH2B2/APS. Interacts (via C-terminus) with MPDZ (via the tenth PDZ domain). Interacts (via phosphorylated tyrosine residues) with PIK3R1 and PIK3 catalytic subunit. Interacts (via phosphorylated tyrosine) with CRK (isoform Crk-II), FYN, SHC1 and MATK/CHK (via SH2 domain). Interacts with LYN and FES/FPS. Interacts (via phosphorylated tyrosine residues) with the protein phosphatases PTPN6/SHP-1 (via SH2 domain), PTPN11/SHP-2 (via SH2 domain) and PTPRU. Interacts with PLCG1. Interacts with DOK1 and TEC. Interacts with IL1RAP (independent of stimulation with KITLG/SCF). A mast cell-specific KITLG/SCF-induced interleukin-33 signaling complex contains IL1RL1, IL1RAP, KIT and MYD88. Ubiquitinated by SOCS6. KIT is rapidly ubiquitinated after autophosphorylation induced by KITLG/SCF binding, leading to internalization and degradation. Post-translationally, autophosphorylated on tyrosine residues. KITLG/SCF binding promotes autophosphorylation. Phosphorylated tyrosine residues are important for interaction with specific binding partners.

Its subcellular location is the cell membrane. The enzyme catalyses L-tyrosyl-[protein] + ATP = O-phospho-L-tyrosyl-[protein] + ADP + H(+). Present in an inactive conformation in the absence of bound ligand. KITLG/SCF binding leads to dimerization and activation by autophosphorylation on tyrosine residues. Activity is down-regulated by PRKCA-mediated phosphorylation on serine residues. Its function is as follows. Tyrosine-protein kinase that acts as a cell-surface receptor for the cytokine KITLG/SCF and plays an essential role in the regulation of cell survival and proliferation, hematopoiesis, stem cell maintenance, gametogenesis, mast cell development, migration and function, and in melanogenesis. In response to KITLG/SCF binding, KIT can activate several signaling pathways. Phosphorylates PIK3R1, PLCG1, SH2B2/APS and CBL. Activates the AKT1 signaling pathway by phosphorylation of PIK3R1, the regulatory subunit of phosphatidylinositol 3-kinase. Activated KIT also transmits signals via GRB2 and activation of RAS, RAF1 and the MAP kinases MAPK1/ERK2 and/or MAPK3/ERK1. Promotes activation of STAT family members STAT1, STAT3, STAT5A and STAT5B. Activation of PLCG1 leads to the production of the cellular signaling molecules diacylglycerol and inositol 1,4,5-trisphosphate. KIT signaling is modulated by protein phosphatases, and by rapid internalization and degradation of the receptor. Activated KIT promotes phosphorylation of the protein phosphatases PTPN6/SHP-1 and PTPRU, and of the transcription factors STAT1, STAT3, STAT5A and STAT5B. Promotes phosphorylation of PIK3R1, CBL, CRK (isoform Crk-II), LYN, MAPK1/ERK2 and/or MAPK3/ERK1, PLCG1, SRC and SHC1. This is Mast/stem cell growth factor receptor Kit (KIT) from Sus scrofa (Pig).